Here is a 216-residue protein sequence, read N- to C-terminus: Flagellin B2 (216 aa).

A propeptide spanning residues 1-12 is cleaved from the precursor; sequence MKIKEFMSNKKG. N-linked (GlcNAc...) asparagine glycans are attached at residues Asn-38, Asn-72, Asn-77, Asn-113, Asn-172, and Asn-208.

It belongs to the archaeal flagellin family. N-linked glycans consist of the 779 Da trisaccharide beta-ManNAc(Thr)-(1-4)-beta-GlcNAc3NAcA-(1-3)-beta-GlcNAc.

The protein resides in the archaeal flagellum. Its function is as follows. Flagellin is the subunit protein which polymerizes to form the filaments of archaeal flagella. The chain is Flagellin B2 (flaB2) from Methanococcus voltae.